Here is a 202-residue protein sequence, read N- to C-terminus: Small ribosomal subunit protein uS5 (202 aa).

An S5 DRBM domain is found at 46-109 (LKSEVLSVGF…RRAKLNIVPV (64 aa)).

Belongs to the universal ribosomal protein uS5 family. Part of the 30S ribosomal subunit. Contacts protein S4.

With S4 and S12 plays an important role in translational accuracy. The protein is Small ribosomal subunit protein uS5 of Thermofilum pendens (strain DSM 2475 / Hrk 5).